Here is a 360-residue protein sequence, read N- to C-terminus: Homeobox-leucine zipper protein HOX21 (360 aa).

Disordered regions lie at residues 25–75 and 88–126; these read QQAA…SSAQ and MLGK…EKKR. The span at 36-55 shows a compositional bias: basic residues; the sequence is HHHHHHHGHHHEQQQHHHHL. Residues 56 to 68 are compositionally biased toward pro residues; that stretch reads GPPPPPPPHPHNP. The segment covering 97 to 109 has biased composition (gly residues); it reads GDGGGGGDEVNGG. Residues 121–180 constitute a DNA-binding region (homeobox); that stretch reads AGEKKRRLNVEQVRTLEKNFELGNKLEPERKMQLARALGLQPRQVAIWFQNRRARWKTKQ. Residues 179–223 form a leucine-zipper region; the sequence is KQLEKDYDALKRQLDAVKAENDALLNHNKKLQAEIVALKGREAAS. Disordered regions lie at residues 233-278 and 299-328; these read EASC…GGGG and GVDI…GNVQ. Polar residues predominate over residues 234–246; that stretch reads ASCSNRSENSSEI.

Belongs to the HD-ZIP homeobox family. Class I subfamily. Expressed in seedlings, roots, stems, leaf blades and panicles.

It localises to the nucleus. Functionally, probable transcription factor. The chain is Homeobox-leucine zipper protein HOX21 (HOX21) from Oryza sativa subsp. indica (Rice).